A 267-amino-acid chain; its full sequence is Tryptophan synthase alpha chain (267 aa).

Catalysis depends on proton acceptor residues Glu-49 and Asp-60.

This sequence belongs to the TrpA family. Tetramer of two alpha and two beta chains.

It catalyses the reaction (1S,2R)-1-C-(indol-3-yl)glycerol 3-phosphate + L-serine = D-glyceraldehyde 3-phosphate + L-tryptophan + H2O. It functions in the pathway amino-acid biosynthesis; L-tryptophan biosynthesis; L-tryptophan from chorismate: step 5/5. Functionally, the alpha subunit is responsible for the aldol cleavage of indoleglycerol phosphate to indole and glyceraldehyde 3-phosphate. The chain is Tryptophan synthase alpha chain from Cyanothece sp. (strain PCC 7425 / ATCC 29141).